The following is a 354-amino-acid chain: Regulatory protein RapD (354 aa).

TPR repeat units follow at residues 64-105 (FENQ…VKTA), 107-126 (KHAV…IHNT), 130-163 (ADLY…YLHQ), 171-204 (ITCK…TQQL), 211-244 (CHAY…QEFE), and 321-353 (IEAW…FIMR).

This sequence belongs to the Rap family.

The protein localises to the cytoplasm. The chain is Regulatory protein RapD (rapD) from Bacillus subtilis (strain 168).